The chain runs to 299 residues: 21S rRNA pseudouridine(2819) synthase (299 aa).

The active site involves Asp106.

Belongs to the pseudouridine synthase RluA family.

It localises to the mitochondrion. It catalyses the reaction uridine(2819) in 21S rRNA = pseudouridine(2819) in 21S rRNA. In terms of biological role, pseudouridylate synthase responsible for the pseudouridine-2819 formation in mitochondrial 21S rRNA. May modulate the efficiency or the fidelity of the mitochondrial translation machinery. This chain is 21S rRNA pseudouridine(2819) synthase (PUS5), found in Kluyveromyces lactis (strain ATCC 8585 / CBS 2359 / DSM 70799 / NBRC 1267 / NRRL Y-1140 / WM37) (Yeast).